The primary structure comprises 556 residues: 2-succinyl-5-enolpyruvyl-6-hydroxy-3-cyclohexene-1-carboxylate synthase (556 aa).

This sequence belongs to the TPP enzyme family. MenD subfamily. Homodimer. Mg(2+) serves as cofactor. Mn(2+) is required as a cofactor. It depends on thiamine diphosphate as a cofactor.

It catalyses the reaction isochorismate + 2-oxoglutarate + H(+) = 5-enolpyruvoyl-6-hydroxy-2-succinyl-cyclohex-3-ene-1-carboxylate + CO2. Its pathway is quinol/quinone metabolism; 1,4-dihydroxy-2-naphthoate biosynthesis; 1,4-dihydroxy-2-naphthoate from chorismate: step 2/7. It functions in the pathway quinol/quinone metabolism; menaquinone biosynthesis. Functionally, catalyzes the thiamine diphosphate-dependent decarboxylation of 2-oxoglutarate and the subsequent addition of the resulting succinic semialdehyde-thiamine pyrophosphate anion to isochorismate to yield 2-succinyl-5-enolpyruvyl-6-hydroxy-3-cyclohexene-1-carboxylate (SEPHCHC). The chain is 2-succinyl-5-enolpyruvyl-6-hydroxy-3-cyclohexene-1-carboxylate synthase from Salmonella arizonae (strain ATCC BAA-731 / CDC346-86 / RSK2980).